Consider the following 285-residue polypeptide: ATP synthase gamma chain (285 aa).

This sequence belongs to the ATPase gamma chain family. F-type ATPases have 2 components, CF(1) - the catalytic core - and CF(0) - the membrane proton channel. CF(1) has five subunits: alpha(3), beta(3), gamma(1), delta(1), epsilon(1). CF(0) has three main subunits: a, b and c.

The protein resides in the cell membrane. Its function is as follows. Produces ATP from ADP in the presence of a proton gradient across the membrane. The gamma chain is believed to be important in regulating ATPase activity and the flow of protons through the CF(0) complex. This is ATP synthase gamma chain from Geobacillus kaustophilus (strain HTA426).